Here is a 314-residue protein sequence, read N- to C-terminus: DNA-directed RNA polymerase subunit alpha (314 aa).

An alpha N-terminal domain (alpha-NTD) region spans residues 1–228; that stretch reads MIEIEKPRIE…EHLNIFVGLT (228 aa). The segment at 245 to 314 is alpha C-terminal domain (alpha-CTD); it reads KEKVLEMSIE…DLGLGLRKED (70 aa).

The protein belongs to the RNA polymerase alpha chain family. In terms of assembly, homodimer. The RNAP catalytic core consists of 2 alpha, 1 beta, 1 beta' and 1 omega subunit. When a sigma factor is associated with the core the holoenzyme is formed, which can initiate transcription.

It carries out the reaction RNA(n) + a ribonucleoside 5'-triphosphate = RNA(n+1) + diphosphate. In terms of biological role, DNA-dependent RNA polymerase catalyzes the transcription of DNA into RNA using the four ribonucleoside triphosphates as substrates. This chain is DNA-directed RNA polymerase subunit alpha, found in Staphylococcus saprophyticus subsp. saprophyticus (strain ATCC 15305 / DSM 20229 / NCIMB 8711 / NCTC 7292 / S-41).